The following is a 286-amino-acid chain: Phosphonates import ATP-binding protein PhnC (286 aa).

One can recognise an ABC transporter domain in the interval 3 to 246; the sequence is FHLKQVTRRF…AVTEIYGTDS (244 aa). 35–42 is an ATP binding site; it reads GRSGAGKS.

It belongs to the ABC transporter superfamily. Phosphonates importer (TC 3.A.1.9.1) family. The complex is composed of two ATP-binding proteins (PhnC), two transmembrane proteins (PhnE) and a solute-binding protein (PhnD).

Its subcellular location is the cell inner membrane. The catalysed reaction is phosphonate(out) + ATP + H2O = phosphonate(in) + ADP + phosphate + H(+). In terms of biological role, part of the ABC transporter complex PhnCDE involved in phosphonates import. Responsible for energy coupling to the transport system. The sequence is that of Phosphonates import ATP-binding protein PhnC from Agrobacterium fabrum (strain C58 / ATCC 33970) (Agrobacterium tumefaciens (strain C58)).